Consider the following 466-residue polypeptide: Glutamate--tRNA ligase (466 aa).

The short motif at 10–20 (PSPTGALHIGG) is the 'HIGH' region element. Positions 99, 101, 126, and 128 each coordinate Zn(2+). The 'KMSKS' region signature appears at 239 to 243 (KLSKR). Lysine 242 is a binding site for ATP.

This sequence belongs to the class-I aminoacyl-tRNA synthetase family. Glutamate--tRNA ligase type 1 subfamily. As to quaternary structure, monomer. Zn(2+) serves as cofactor.

The protein resides in the cytoplasm. It catalyses the reaction tRNA(Glu) + L-glutamate + ATP = L-glutamyl-tRNA(Glu) + AMP + diphosphate. Catalyzes the attachment of glutamate to tRNA(Glu) in a two-step reaction: glutamate is first activated by ATP to form Glu-AMP and then transferred to the acceptor end of tRNA(Glu). The chain is Glutamate--tRNA ligase from Pelagibacter ubique (strain HTCC1062).